The following is a 287-amino-acid chain: Large ribosomal subunit protein uL2 (287 aa).

The interval 221–287 (RGSVMNPCDH…SKRSRGGRDS (67 aa)) is disordered. Positions 258–287 (KTRKRNKPSNRFVLRKRRRVSKRSRGGRDS) are enriched in basic residues.

Belongs to the universal ribosomal protein uL2 family. Part of the 50S ribosomal subunit. Forms a bridge to the 30S subunit in the 70S ribosome.

Functionally, one of the primary rRNA binding proteins. Required for association of the 30S and 50S subunits to form the 70S ribosome, for tRNA binding and peptide bond formation. It has been suggested to have peptidyltransferase activity; this is somewhat controversial. Makes several contacts with the 16S rRNA in the 70S ribosome. The protein is Large ribosomal subunit protein uL2 of Prochlorococcus marinus (strain MIT 9211).